The following is a 163-amino-acid chain: ATP synthase subunit b 1 (163 aa).

A helical transmembrane segment spans residues alanine 7 to valine 27.

The protein belongs to the ATPase B chain family. In terms of assembly, F-type ATPases have 2 components, F(1) - the catalytic core - and F(0) - the membrane proton channel. F(1) has five subunits: alpha(3), beta(3), gamma(1), delta(1), epsilon(1). F(0) has three main subunits: a(1), b(2) and c(10-14). The alpha and beta chains form an alternating ring which encloses part of the gamma chain. F(1) is attached to F(0) by a central stalk formed by the gamma and epsilon chains, while a peripheral stalk is formed by the delta and b chains.

It localises to the cell inner membrane. Its function is as follows. F(1)F(0) ATP synthase produces ATP from ADP in the presence of a proton or sodium gradient. F-type ATPases consist of two structural domains, F(1) containing the extramembraneous catalytic core and F(0) containing the membrane proton channel, linked together by a central stalk and a peripheral stalk. During catalysis, ATP synthesis in the catalytic domain of F(1) is coupled via a rotary mechanism of the central stalk subunits to proton translocation. Component of the F(0) channel, it forms part of the peripheral stalk, linking F(1) to F(0). The polypeptide is ATP synthase subunit b 1 (Rhodopseudomonas palustris (strain ATCC BAA-98 / CGA009)).